We begin with the raw amino-acid sequence, 651 residues long: Acetyl-coenzyme A synthetase (651 aa).

Residues 189–192 (RGGK), T311, and N335 each bind CoA. ATP contacts are provided by residues 387-389 (GEP), 411-416 (DTWWQT), D500, and R515. Position 523 (S523) interacts with CoA. R526 is an ATP binding site. The Mg(2+) site is built by V537, H539, and V542. R584 contributes to the CoA binding site. An N6-acetyllysine modification is found at K609.

This sequence belongs to the ATP-dependent AMP-binding enzyme family. It depends on Mg(2+) as a cofactor. Acetylated. Deacetylation by the SIR2-homolog deacetylase activates the enzyme.

It catalyses the reaction acetate + ATP + CoA = acetyl-CoA + AMP + diphosphate. Functionally, catalyzes the conversion of acetate into acetyl-CoA (AcCoA), an essential intermediate at the junction of anabolic and catabolic pathways. AcsA undergoes a two-step reaction. In the first half reaction, AcsA combines acetate with ATP to form acetyl-adenylate (AcAMP) intermediate. In the second half reaction, it can then transfer the acetyl group from AcAMP to the sulfhydryl group of CoA, forming the product AcCoA. The chain is Acetyl-coenzyme A synthetase from Rhizobium etli (strain CIAT 652).